Reading from the N-terminus, the 213-residue chain is MERSRSPRETGSTSSRDKSDADWSERRREERTRTWKSRSPIRAHGERSWGSWRSREKNQSSSTASRPYQKATRKETATKKTKHTPFNVFSAHRALSKTDLQFCGFYWHSTRLASKGTNEIFNGLKQSFQSKAIDGKLDWEGVGELLFEQKKCLDTWYRNMMYHFALGGDCEKCNYWDDVYKKHLANVDTYSVAEEITDSEMLEAAEAVDAANQ.

Residues 1 to 80 (MERSRSPRET…ATRKETATKK (80 aa)) form a disordered region. Basic and acidic residues-rich tracts occupy residues 15-33 (SRDK…ERTR) and 43-58 (AHGE…REKN).

This sequence belongs to the Bocaparvovirus Non-structural protein NP-1 family.

It is found in the host nucleus. Its function is as follows. Required for the expression of the capsid proteins. Performs the splicing and internal polyadenylation of the viral capsid-encoding mRNA precursor, which allows its maturation and expression. Transactivates the viral promoter. The chain is Non-structural protein NP-1 (NP1) from Bos taurus (Bovine).